The following is a 351-amino-acid chain: uncharacterized protein (351 aa).

The first 27 residues, 1-27, serve as a signal peptide directing secretion; that stretch reads MKNKKRVLIASSLSCAILLLSAATTQA. Residues 28 to 71 form a disordered region; that stretch reads NSAHKDSQDQNKKEHVDKSQQKDKRNVTNKDKNSTVPDDIGKNG. Basic and acidic residues predominate over residues 30–60; it reads AHKDSQDQNKKEHVDKSQQKDKRNVTNKDKN.

The protein belongs to the aerolysin family.

This is an uncharacterized protein from Staphylococcus aureus (strain N315).